The primary structure comprises 345 residues: UDP-3-O-acylglucosamine N-acyltransferase (345 aa).

The Proton acceptor role is filled by H237.

Belongs to the transferase hexapeptide repeat family. LpxD subfamily. As to quaternary structure, homotrimer.

It catalyses the reaction a UDP-3-O-[(3R)-3-hydroxyacyl]-alpha-D-glucosamine + a (3R)-hydroxyacyl-[ACP] = a UDP-2-N,3-O-bis[(3R)-3-hydroxyacyl]-alpha-D-glucosamine + holo-[ACP] + H(+). It functions in the pathway bacterial outer membrane biogenesis; LPS lipid A biosynthesis. Functionally, catalyzes the N-acylation of UDP-3-O-acylglucosamine using 3-hydroxyacyl-ACP as the acyl donor. Is involved in the biosynthesis of lipid A, a phosphorylated glycolipid that anchors the lipopolysaccharide to the outer membrane of the cell. This Geobacter sp. (strain M21) protein is UDP-3-O-acylglucosamine N-acyltransferase.